Here is a 348-residue protein sequence, read N- to C-terminus: Rhodopsin (348 aa).

N-acetylmethionine is present on Met-1. Residues 1–36 (MNGTEGPDFYIPMSNQTGVVRSPFEYPQYYLAEPWQ) are Extracellular-facing. N-linked (GlcNAc...) asparagine glycosylation is found at Asn-2 and Asn-15. A helical membrane pass occupies residues 37-61 (FSMLAAYMFLLIVLGFPINFLTLYV). Residues 62-73 (TVQHKKLRTPLN) lie on the Cytoplasmic side of the membrane. A helical transmembrane segment spans residues 74–96 (YILLNLAVADLFMVLGGFTTTLY). Residues 97-110 (TSLHGYFVFGPTGC) are Extracellular-facing. An intrachain disulfide couples Cys-110 to Cys-187. A helical transmembrane segment spans residues 111-133 (NVEGFFATLGGEIALWSLVVLAI). The 'Ionic lock' involved in activated form stabilization signature appears at 134–136 (ERY). Residues 134 to 152 (ERYVVVCKPMSNFRFGENH) are Cytoplasmic-facing. Residues 153–173 (AIMGVAFTWIMALACAAPPLV) form a helical membrane-spanning segment. The Extracellular segment spans residues 174-202 (GWSRYIPEGMQCSCGIDYYTLKPEVNNES). Residue Glu-201 participates in Zn(2+) binding. Residues 203 to 224 (FVIYMFVVHFTIPLIIIFFCYG) traverse the membrane as a helical segment. Residues 225-252 (QLVFTVKEAAAQQQESATTQKAEKEVTR) lie on the Cytoplasmic side of the membrane. The chain crosses the membrane as a helical span at residues 253-274 (MVIIMVIAFLICWVPYASVAFY). At 275–286 (IFTHQGSNFGPI) the chain is on the extracellular side. Position 279 (Gln-279) interacts with Zn(2+). The chain crosses the membrane as a helical span at residues 287-308 (FMTIPAFFAKSSSIYNPVIYIM). Lys-296 carries the post-translational modification N6-(retinylidene)lysine. The Cytoplasmic segment spans residues 309–348 (MNKQFRNCMLTTICCGKNPLGDDEASATASKTETSQVAPA). 2 S-palmitoyl cysteine lipidation sites follow: Cys-322 and Cys-323. The interaction with SAG stretch occupies residues 330–348 (DDEASATASKTETSQVAPA). Residue Ser-334 is modified to Phosphoserine. Thr-336 carries the post-translational modification Phosphothreonine. Ser-338 is subject to Phosphoserine. Phosphothreonine occurs at positions 340 and 342. Ser-343 carries the post-translational modification Phosphoserine.

Belongs to the G-protein coupled receptor 1 family. Opsin subfamily. In terms of assembly, homodimer. May form a complex composed of RHO, GRK1 and RCVRN in a Ca(2+)-dependent manner; RCVRN prevents the interaction between GRK1 and RHO. Interacts with GRK1. Interacts (phosphorylated form) with SAG. Interacts with GNAT1. Interacts with GNAT3. SAG and G-proteins compete for a common binding site. Interacts with PRCD; the interaction promotes PRCD stability. Forms a complex with ASAP1 and ARF4. Forms a complex with ASAP1, RAB11A, Rabin8/RAB3IP, ARF4 and RAB11FIP3; the complex regulates Golgi-to-cilia rhodopsin/RHO transport in photoreceptors. Post-translationally, phosphorylated on some or all of the serine and threonine residues present in the C-terminal region. In terms of processing, contains one covalently linked retinal chromophore. Upon light absorption, the covalently bound 11-cis-retinal is converted to all-trans-retinal. After hydrolysis of the Schiff base and release of the covalently bound all-trans-retinal, active rhodopsin is regenerated by binding of a fresh molecule of 11-cis-retinal.

The protein localises to the membrane. Its subcellular location is the cell projection. It is found in the cilium. The protein resides in the photoreceptor outer segment. In terms of biological role, photoreceptor required for image-forming vision at low light intensity. Required for photoreceptor cell viability after birth. Light-induced isomerization of 11-cis to all-trans retinal triggers a conformational change that activates signaling via G-proteins. Subsequent receptor phosphorylation mediates displacement of the bound G-protein alpha subunit by the arrestin SAG and terminates signaling. This Oryctolagus cuniculus (Rabbit) protein is Rhodopsin (RHO).